Reading from the N-terminus, the 335-residue chain is Fructose-1,6-bisphosphatase class 1 (335 aa).

Residues Glu92, Asp114, Leu116, and Asp117 each contribute to the Mg(2+) site. Substrate-binding positions include 117 to 120, Asn209, and Lys275; that span reads DGSS. A Mg(2+)-binding site is contributed by Glu281.

The protein belongs to the FBPase class 1 family. Homotetramer. Mg(2+) serves as cofactor.

Its subcellular location is the cytoplasm. The catalysed reaction is beta-D-fructose 1,6-bisphosphate + H2O = beta-D-fructose 6-phosphate + phosphate. It functions in the pathway carbohydrate biosynthesis; gluconeogenesis. The polypeptide is Fructose-1,6-bisphosphatase class 1 (Polaromonas sp. (strain JS666 / ATCC BAA-500)).